The following is a 416-amino-acid chain: Glutamyl-tRNA reductase (416 aa).

Substrate is bound by residues Thr-49–Arg-52, Ser-105, Glu-110–Gln-112, and Gln-116. Cys-50 functions as the Nucleophile in the catalytic mechanism. Gly-185 to Ile-190 lines the NADP(+) pocket.

It belongs to the glutamyl-tRNA reductase family. In terms of assembly, homodimer.

It carries out the reaction (S)-4-amino-5-oxopentanoate + tRNA(Glu) + NADP(+) = L-glutamyl-tRNA(Glu) + NADPH + H(+). The protein operates within porphyrin-containing compound metabolism; protoporphyrin-IX biosynthesis; 5-aminolevulinate from L-glutamyl-tRNA(Glu): step 1/2. Functionally, catalyzes the NADPH-dependent reduction of glutamyl-tRNA(Glu) to glutamate 1-semialdehyde (GSA). The polypeptide is Glutamyl-tRNA reductase (Shewanella putrefaciens (strain CN-32 / ATCC BAA-453)).